We begin with the raw amino-acid sequence, 167 residues long: MPLGKYYCDYCEKQFQDTPAARKRHLDGAQHHRARALWYDAVRRQELHGGGGGAPPLLHQPGAAAIGVCQHFVRTGTCKFGDSCRYFHPKPPPANPGPAPSGPVSGPMAQQSNIQGSQPNFVGYQAADGSSFSGNILGGHTSWGNLPPSLRPPPEGGYPPFPFVDWG.

The C3H1-type zinc finger occupies 63-91; sequence AAAIGVCQHFVRTGTCKFGDSCRYFHPKP. The segment covering 89–101 has biased composition (pro residues); sequence PKPPPANPGPAPS. Positions 89–167 are disordered; sequence PKPPPANPGP…YPPFPFVDWG (79 aa). Residues 108–120 are compositionally biased toward polar residues; that stretch reads MAQQSNIQGSQPN. Over residues 149–167 the composition is skewed to pro residues; sequence SLRPPPEGGYPPFPFVDWG.

This is Zinc finger CCCH domain-containing protein 3 from Oryza sativa subsp. japonica (Rice).